Here is a 170-residue protein sequence, read N- to C-terminus: Urease accessory protein UreE (170 aa).

This sequence belongs to the UreE family.

The protein localises to the cytoplasm. Its function is as follows. Involved in urease metallocenter assembly. Binds nickel. Probably functions as a nickel donor during metallocenter assembly. The polypeptide is Urease accessory protein UreE (Helicobacter pylori (strain HPAG1)).